Here is a 251-residue protein sequence, read N- to C-terminus: MSVSPVSIVSTPVAVSASPAGAPDQPVQPVTVRWRGREAYEASFDAMRAFTDTRTADTGDEIWVVEHPPVYTLGQAGDPAHLLVADSGVPLVKVDRGGQITYHGPGQIVVYLLLDLRRRKLMVRTLVTKIEEAVIETLAAYNLASVRKAGAPGIYVASGVHEGAKIAALGLKIRNGCSYHGLSLNVKMDLRPFLAINPCGYAGLETVDMASLEVAADWNDVAHTLVGRLIANLDGASAAADKPHALEQSND.

The 186-residue stretch at 56 to 241 (ADTGDEIWVV…NLDGASAAAD (186 aa)) folds into the BPL/LPL catalytic domain. Substrate is bound by residues 96–103 (RGGQITYH), 168–170 (ALG), and 181–183 (GLS). C199 acts as the Acyl-thioester intermediate in catalysis.

The protein belongs to the LipB family.

The protein localises to the cytoplasm. It catalyses the reaction octanoyl-[ACP] + L-lysyl-[protein] = N(6)-octanoyl-L-lysyl-[protein] + holo-[ACP] + H(+). Its pathway is protein modification; protein lipoylation via endogenous pathway; protein N(6)-(lipoyl)lysine from octanoyl-[acyl-carrier-protein]: step 1/2. Catalyzes the transfer of endogenously produced octanoic acid from octanoyl-acyl-carrier-protein onto the lipoyl domains of lipoate-dependent enzymes. Lipoyl-ACP can also act as a substrate although octanoyl-ACP is likely to be the physiological substrate. In Burkholderia cenocepacia (strain HI2424), this protein is Octanoyltransferase.